A 488-amino-acid chain; its full sequence is 3-octaprenyl-4-hydroxybenzoate carboxy-lyase (488 aa).

Asparagine 172 contacts Mn(2+). Prenylated FMN-binding positions include 175–177, 189–191, and 194–195; these read IYR, RWL, and RG. Glutamate 238 contributes to the Mn(2+) binding site. Aspartate 287 (proton donor) is an active-site residue.

The protein belongs to the UbiD family. In terms of assembly, homohexamer. It depends on prenylated FMN as a cofactor. Mn(2+) is required as a cofactor.

The protein localises to the cell membrane. The enzyme catalyses a 4-hydroxy-3-(all-trans-polyprenyl)benzoate + H(+) = a 2-(all-trans-polyprenyl)phenol + CO2. The protein operates within cofactor biosynthesis; ubiquinone biosynthesis. Catalyzes the decarboxylation of 3-octaprenyl-4-hydroxy benzoate to 2-octaprenylphenol, an intermediate step in ubiquinone biosynthesis. This is 3-octaprenyl-4-hydroxybenzoate carboxy-lyase from Pseudomonas putida (strain GB-1).